The primary structure comprises 466 residues: Putative chitinase (466 aa).

An N-terminal signal peptide occupies residues 1-17; the sequence is MYLTIWLVSILALGTWG. Positions 20–380 constitute a GH18 domain; that stretch reads FNRFCHYNSW…MAVIHGLNAY (361 aa). Cys24 and Cys49 form a disulfide bridge. Catalysis depends on Glu141, which acts as the Proton donor. Residues 408 to 442 adopt a coiled-coil conformation; the sequence is NYRRRNQQEKVAEMEQRIRHLEQELQQSMGNMAYE.

This sequence belongs to the glycosyl hydrolase 18 family. Prismatic layer of shell (at protein level). Expressed primarily in the mantle with highest level in the mantle edge and lower level in the mantle pallium.

Its subcellular location is the secreted. It carries out the reaction Random endo-hydrolysis of N-acetyl-beta-D-glucosaminide (1-&gt;4)-beta-linkages in chitin and chitodextrins.. The chain is Putative chitinase from Pinctada maxima (Silver-lipped pearl oyster).